A 951-amino-acid chain; its full sequence is Serine/threonine-protein phosphatase 4 regulatory subunit 1 (951 aa).

HEAT repeat units lie at residues 26-63, 82-119, 127-164, 168-206, 208-246, 248-285, and 287-324; these read ESDV…VFNR, RDCI…FCQE, AFSK…QELI, DVET…MVGK, ITER…VVGQ, ATEE…ATCQ, and IRRT…TFAN. 4 disordered regions span residues 326 to 395, 407 to 501, 539 to 569, and 592 to 612; these read SSSG…DMRV, SESP…MATR, HDEA…SISE, and GGAD…ERRP. Composition is skewed to basic and acidic residues over residues 332–360, 464–483, and 539–551; these read FKDE…RPED, DLDK…ERTG, and HDEA…RSEL. The stretch at 502 to 539 is one HEAT 8 repeat; it reads KELEEMIENLEPHMDDPDVKAQVEVLSAALRASTLDAH. Over residues 594–604 the composition is skewed to gly residues; the sequence is ADVGPGGGGGF. 4 HEAT repeats span residues 699 to 735, 777 to 815, 820 to 858, and 862 to 899; these read LTAA…LLHI, RDVY…KLHM, TFGV…DDCL, and QFAV…EKEY. Serine 936 bears the Phosphoserine mark.

In terms of assembly, serine/threonine-protein phosphatase 4 (PP4) occurs in different assemblies of the catalytic and one or more regulatory subunits. Component of the PP4 complex PPP4C-PPP4R1. Interacts with HDAC3.

Regulatory subunit of serine/threonine-protein phosphatase 4. May play a role in regulation of cell division in renal glomeruli. The PPP4C-PPP4R1 PP4 complex may play a role in dephosphorylation and regulation of HDAC3. Plays a role in the inhibition of TNF-induced NF-kappa-B activation by regulating the dephosphorylation of TRAF2. The sequence is that of Serine/threonine-protein phosphatase 4 regulatory subunit 1 (Ppp4r1) from Rattus norvegicus (Rat).